The following is a 443-amino-acid chain: Exodeoxyribonuclease 7 large subunit (443 aa).

Belongs to the XseA family. In terms of assembly, heterooligomer composed of large and small subunits.

Its subcellular location is the cytoplasm. The enzyme catalyses Exonucleolytic cleavage in either 5'- to 3'- or 3'- to 5'-direction to yield nucleoside 5'-phosphates.. Bidirectionally degrades single-stranded DNA into large acid-insoluble oligonucleotides, which are then degraded further into small acid-soluble oligonucleotides. This is Exodeoxyribonuclease 7 large subunit from Vibrio parahaemolyticus serotype O3:K6 (strain RIMD 2210633).